The sequence spans 307 residues: Cyclin-dependent kinase 5 activator 1 (307 aa).

Glycine 2 is lipidated: N-myristoyl glycine. Phosphoserine; by CDK5 is present on serine 8. The segment at 97–135 (TFAQPPPAQPPAPPASQLSGSQTGVSSSVKKAPHPAVSS) is disordered. Positions 100–110 (QPPPAQPPAPP) are enriched in pro residues. Residues 112–125 (SQLSGSQTGVSSSV) are compositionally biased toward polar residues. The residue at position 138 (threonine 138) is a Phosphothreonine; by CDK5.

Belongs to the cyclin-dependent kinase 5 activator family. Heterodimer composed of a catalytic subunit CDK5 and a regulatory subunit CDK5R1 (p25) and macromolecular complex composed of at least CDK5, CDK5R1 (p35) and CDK5RAP1 or CDK5RAP2 or CDK5RAP3. Only the heterodimer shows kinase activity. Interacts with EPHA4 and NGEF; may mediate the activation of NGEF by EPHA4. Interacts with RASGRF2. The complex p35/CDK5 interacts with CLOCK. Post-translationally, the p35 form is proteolytically cleaved by calpain, giving rise to the p25 form. P35 has a 5 to 10 fold shorter half-life compared to p25. The conversion results in deregulation of the CDK5 kinase: p25/CDK5 kinase displays an increased and altered tau phosphorylation in comparison to the p35/CDK5 kinase in vivo. Myristoylated. A proper myristoylation signal is essential for the proper distribution of p35. In terms of processing, phosphorylation at Ser-8 and Thr-138 by CDK5 prevents calpain-mediated proteolysis. Post-translationally, ubiquitinated, leading to its degradation: degradation of p35 by proteasome results in down-regulation of CDK5 activity. During this process, CDK5 phosphorylates p35 and induces its ubiquitination and subsequent degradation. Ubiquitinated by the CRL2(FEM1B) complex, which recognizes the -Gly-Leu-Asp-Arg C-degron at the C-terminus, leading to its degradation. In terms of tissue distribution, brain and neuron specific.

Its subcellular location is the cell membrane. The protein resides in the cell projection. It is found in the neuron projection. The protein localises to the nucleus. It localises to the cytoplasm. Its subcellular location is the perinuclear region. The protein resides in the perikaryon. In terms of biological role, p35 is a neuron specific activator of CDK5. The complex p35/CDK5 is required for neurite outgrowth and cortical lamination. Involved in dendritic spine morphogenesis by mediating the EFNA1-EPHA4 signaling. Activator of TPKII. The complex p35/CDK5 participates in the regulation of the circadian clock by modulating the function of CLOCK protein: phosphorylates CLOCK at 'Thr-451' and 'Thr-461' and regulates the transcriptional activity of the CLOCK-BMAL1 heterodimer in association with altered stability and subcellular distribution. This is Cyclin-dependent kinase 5 activator 1 (CDK5R1) from Bos taurus (Bovine).